Reading from the N-terminus, the 531-residue chain is Arginine--tRNA ligase (531 aa).

A 'HIGH' region motif is present at residues 113–123 (ANPTGPLHIGH).

The protein belongs to the class-I aminoacyl-tRNA synthetase family. As to quaternary structure, monomer.

It localises to the cytoplasm. The catalysed reaction is tRNA(Arg) + L-arginine + ATP = L-arginyl-tRNA(Arg) + AMP + diphosphate. The sequence is that of Arginine--tRNA ligase from Campylobacter fetus subsp. fetus (strain 82-40).